Here is a 60-residue protein sequence, read N- to C-terminus: Large ribosomal subunit protein bL32 (60 aa).

Positions 1–16 (MAVPRRKTSPSRRGMR) are enriched in basic residues. Residues 1–60 (MAVPRRKTSPSRRGMRRSADALKRPTYAEDKDSGELRRPHHLDLKTGMYKGRQVIKKKDA) form a disordered region. Residues 17–44 (RSADALKRPTYAEDKDSGELRRPHHLDL) are compositionally biased toward basic and acidic residues.

This sequence belongs to the bacterial ribosomal protein bL32 family.

The protein is Large ribosomal subunit protein bL32 of Rhodopseudomonas palustris (strain BisB5).